A 266-amino-acid chain; its full sequence is Bax inhibitor 1 (266 aa).

The disordered stretch occupies residues 1 to 22 (MPANYQSVPQDDPSVPNLAQAP). Helical transmembrane passes span 70 to 90 (LFVT…SFWV), 92 to 112 (MHPW…FGLI), 123 to 143 (IFLF…ITFF), 147 to 167 (IILE…AFTF), 177 to 197 (GGFL…FFFV), 201 to 221 (PFID…YILF), and 240 to 260 (LMLY…LGML).

This sequence belongs to the BI1 family. LFG subfamily.

It localises to the endoplasmic reticulum membrane. The protein localises to the mitochondrion membrane. The protein resides in the golgi apparatus membrane. It is found in the vacuole membrane. Its function is as follows. Links the unfolded protein response and programmed cell death and mediates mitochondrial-dependent apoptosis. Induces cell death and disruption of the mitochondrial transmembrane potential. The chain is Bax inhibitor 1 (bxi1) from Schizosaccharomyces pombe (strain 972 / ATCC 24843) (Fission yeast).